A 213-amino-acid polypeptide reads, in one-letter code: Protein-L-isoaspartate O-methyltransferase (213 aa).

Ser-62 is a catalytic residue.

It belongs to the methyltransferase superfamily. L-isoaspartyl/D-aspartyl protein methyltransferase family.

It localises to the cytoplasm. The catalysed reaction is [protein]-L-isoaspartate + S-adenosyl-L-methionine = [protein]-L-isoaspartate alpha-methyl ester + S-adenosyl-L-homocysteine. Its function is as follows. Catalyzes the methyl esterification of L-isoaspartyl residues in peptides and proteins that result from spontaneous decomposition of normal L-aspartyl and L-asparaginyl residues. It plays a role in the repair and/or degradation of damaged proteins. The chain is Protein-L-isoaspartate O-methyltransferase from Desulfovibrio desulfuricans (strain ATCC 27774 / DSM 6949 / MB).